A 139-amino-acid polypeptide reads, in one-letter code: Small ribosomal subunit protein bS16 (139 aa).

Residues 85 to 108 are disordered; sequence ESKSGKKPAKKATTKEASAKKPTD. Residues 97 to 108 are compositionally biased toward basic and acidic residues; it reads TTKEASAKKPTD.

It belongs to the bacterial ribosomal protein bS16 family.

This chain is Small ribosomal subunit protein bS16, found in Leuconostoc mesenteroides subsp. mesenteroides (strain ATCC 8293 / DSM 20343 / BCRC 11652 / CCM 1803 / JCM 6124 / NCDO 523 / NBRC 100496 / NCIMB 8023 / NCTC 12954 / NRRL B-1118 / 37Y).